Consider the following 92-residue polypeptide: Muconolactone Delta-isomerase (92 aa).

This sequence belongs to the muconolactone Delta-isomerase family. Homodecamer.

It catalyses the reaction (S)-muconolactone = (4,5-dihydro-5-oxofuran-2-yl)-acetate. The protein operates within aromatic compound metabolism; beta-ketoadipate pathway; 5-oxo-4,5-dihydro-2-furylacetate from catechol: step 3/3. This chain is Muconolactone Delta-isomerase (catC), found in Cupriavidus pinatubonensis (strain JMP 134 / LMG 1197) (Cupriavidus necator (strain JMP 134)).